Consider the following 398-residue polypeptide: Pectate lyase 1 (398 aa).

Residues 1 to 25 (MGIKHCCYILYFTLALVTLLQPVRS) form the signal peptide. The N-linked (GlcNAc...) asparagine glycan is linked to Asn-37. Residues Cys-55 and Cys-72 are joined by a disulfide bond. Asp-195, Asp-219, and Asp-223 together coordinate Ca(2+). Residue Arg-275 is part of the active site.

The protein belongs to the polysaccharide lyase 1 family. Amb a subfamily. As to quaternary structure, monomer. Ca(2+) is required as a cofactor. Post-translationally, the N-terminus is blocked. In terms of tissue distribution, pollen and flowers.

The catalysed reaction is Eliminative cleavage of (1-&gt;4)-alpha-D-galacturonan to give oligosaccharides with 4-deoxy-alpha-D-galact-4-enuronosyl groups at their non-reducing ends.. It participates in glycan metabolism; pectin degradation; 2-dehydro-3-deoxy-D-gluconate from pectin: step 2/5. Functionally, has pectate lyase activity. The polypeptide is Pectate lyase 1 (Ambrosia artemisiifolia (Common ragweed)).